The sequence spans 292 residues: HTH-type transcriptional regulator BlaA (292 aa).

One can recognise an HTH lysR-type domain in the interval 5–62 (LPLNALRAFEASARHLNFTKAALELYVTQGAVSQQVRMLEERLGVILFKRLPRGLEMT). The segment at residues 22-41 (FTKAALELYVTQGAVSQQVR) is a DNA-binding region (H-T-H motif).

It belongs to the LysR transcriptional regulatory family.

Functionally, positive regulator of the expression of the gene (blaB) for beta-lactamase. The polypeptide is HTH-type transcriptional regulator BlaA (blaA) (Proteus vulgaris).